Here is a 95-residue protein sequence, read N- to C-terminus: Trypomastigote decay-accelerating factor (95 aa).

This sequence belongs to the receptors of complement activation (RCA) family.

In terms of biological role, interferes with the efficient assembly of the host C3 convertase. Could protect parasites from complement-mediated lysis by sera from a number of different species. The sequence is that of Trypomastigote decay-accelerating factor from Trypanosoma cruzi.